We begin with the raw amino-acid sequence, 683 residues long: ATP-dependent zinc metalloprotease FtsH (683 aa).

The disordered stretch occupies residues 1–43; sequence MEDKNIKDDEILDDQNDNQEDVQNQDEEKEIKPKKPKKKVYIS. Residues 1 to 70 lie on the Cytoplasmic side of the membrane; that stretch reads MEDKNIKDDE…KNNNISFRVK (70 aa). The segment covering 10–28 has biased composition (acidic residues); it reads EILDDQNDNQEDVQNQDEE. A helical membrane pass occupies residues 71-91; it reads PPIFFFLILILMSTLFYFYGN. At 92–174 the chain is on the periplasmic side; it reads KTALFQEKRE…IVVLGTPVSS (83 aa). Residues 175-195 traverse the membrane as a helical segment; it reads IITRAIFSFAPLFMLLFFFYF. Over 196 to 683 the chain is Cytoplasmic; it reads INKKMMGSSG…LDDEQLEKYY (488 aa). Residue 270–277 coordinates ATP; it reads GEPGTGKT. His-494 lines the Zn(2+) pocket. Residue Glu-495 is part of the active site. His-498 and Asp-569 together coordinate Zn(2+).

In the central section; belongs to the AAA ATPase family. It in the C-terminal section; belongs to the peptidase M41 family. As to quaternary structure, homohexamer. It depends on Zn(2+) as a cofactor.

It localises to the cell inner membrane. In terms of biological role, acts as a processive, ATP-dependent zinc metallopeptidase for both cytoplasmic and membrane proteins. Plays a role in the quality control of integral membrane proteins. The chain is ATP-dependent zinc metalloprotease FtsH from Streptobacillus moniliformis (strain ATCC 14647 / DSM 12112 / NCTC 10651 / 9901).